Reading from the N-terminus, the 904-residue chain is Toll-like receptor 3 (904 aa).

Residues methionine 1 to serine 23 form the signal peptide. The LRRNT domain maps to serine 24–threonine 51. Topologically, residues serine 24–leucine 704 are lumenal. The cysteines at positions 28 and 37 are disulfide-linked. 3 N-linked (GlcNAc...) asparagine glycosylation sites follow: asparagine 52, asparagine 57, and asparagine 70. 6 LRR repeats span residues asparagine 52 to arginine 73, glutamine 76 to lysine 97, methionine 100 to phenylalanine 121, asparagine 124 to lysine 145, asparagine 148 to valine 168, and asparagine 172 to isoleucine 193. Cysteines 95 and 122 form a disulfide. The N-linked (GlcNAc...) asparagine glycan is linked to asparagine 124. An N-linked (GlcNAc...) asparagine glycan is attached at asparagine 196. LRR repeat units follow at residues serine 198–alanine 219 and arginine 222–glutamate 244. Residues asparagine 247, asparagine 252, asparagine 265, asparagine 275, and asparagine 291 are each glycosylated (N-linked (GlcNAc...) asparagine). LRR repeat units follow at residues serine 249–glycine 270, asparagine 275–tryptophan 296, glutamine 299–glycine 320, asparagine 323–proline 344, cysteine 356–glycine 377, asparagine 380–threonine 400, proline 408–tryptophan 429, histidine 432–glycine 454, tyrosine 465–methionine 486, asparagine 507–glycine 528, lysine 531–glycine 552, histidine 563–aspartate 584, glutamate 587–asparagine 608, and serine 611–proline 632. N-linked (GlcNAc...) asparagine glycans are attached at residues asparagine 398 and asparagine 413. N-linked (GlcNAc...) asparagine glycosylation occurs at asparagine 507. Asparagine 636 and asparagine 662 each carry an N-linked (GlcNAc...) asparagine glycan. An LRRCT domain is found at asparagine 645–aspartate 698. 2 disulfide bridges follow: cysteine 649-cysteine 677 and cysteine 651-cysteine 696. A helical membrane pass occupies residues phenylalanine 705 to phenylalanine 725. The Cytoplasmic portion of the chain corresponds to glutamate 726–histidine 904. The region spanning phenylalanine 754–leucine 897 is the TIR domain. Tyrosine 759 carries the post-translational modification Phosphotyrosine. Glycyl lysine isopeptide (Lys-Gly) (interchain with G-Cter in ubiquitin) cross-links involve residues lysine 765, lysine 812, and lysine 831. A Phosphotyrosine modification is found at tyrosine 858.

It belongs to the Toll-like receptor family. In terms of assembly, monomer and homodimer; dimerization is triggered by ligand-binding, the signaling unit is composed of one ds-RNA of around 40 bp and two TLR3 molecules, and lateral clustering of signaling units along the length of the ds-RNA ligand is required for TLR3 signal transduction. Interacts (via transmembrane domain) with UNC93B1; the interaction is required for transport from the ER to the endosomes. Interacts with SRC; upon binding of double-stranded RNA. Interacts with TICAM1 (via the TIR domain) in response to poly(I:C) and this interaction is enhanced in the presence of WDFY1. The tyrosine-phosphorylated form (via TIR domain) interacts with WDFY1 (via WD repeat 2) in response to poly(I:C). In terms of processing, heavily N-glycosylated, except on that part of the surface of the ectodomain that is involved in ligand binding. TLR3 signaling requires a proteolytic cleavage mediated by cathepsins CTSB and CTSH, the cleavage occurs between amino acids 252 and 346. The cleaved form of TLR3 is the predominant form found in endosomes. Post-translationally, ubiquitinated by TRIM3; leading to recognition and sorting of polyubiquitinated TLR3 by the ESCRT complexes. Ubiquitinated by ZNRF1 via 'Lys-63'-linked ubiquitin chains; leading to TLR3 lysosomal trafficking and degradation. Ubiquitinated by RNF170 at Lys-765 via 'Lys-48'-linked ubiquitin chains; leading to TLR3 proteasomal degradation. As to expression, expressed at high level in placenta and pancreas. Also detected in CD11c+ immature dendritic cells. Only expressed in dendritic cells and not in other leukocytes, including monocyte precursors. TLR3 is the TLR that is expressed most strongly in the brain, especially in astrocytes, glia, and neurons.

It is found in the endoplasmic reticulum membrane. The protein localises to the endosome membrane. It localises to the early endosome. Key component of innate and adaptive immunity. TLRs (Toll-like receptors) control host immune response against pathogens through recognition of molecular patterns specific to microorganisms. TLR3 is a nucleotide-sensing TLR which is activated by double-stranded RNA, a sign of viral infection. Acts via the adapter TRIF/TICAM1, leading to NF-kappa-B activation, IRF3 nuclear translocation, cytokine secretion and the inflammatory response. In Homo sapiens (Human), this protein is Toll-like receptor 3.